A 396-amino-acid polypeptide reads, in one-letter code: Ornithine aminotransferase (396 aa).

Lysine 255 is subject to N6-(pyridoxal phosphate)lysine.

Belongs to the class-III pyridoxal-phosphate-dependent aminotransferase family. OAT subfamily. It depends on pyridoxal 5'-phosphate as a cofactor.

Its subcellular location is the cytoplasm. The enzyme catalyses a 2-oxocarboxylate + L-ornithine = L-glutamate 5-semialdehyde + an L-alpha-amino acid. Its pathway is amino-acid biosynthesis; L-proline biosynthesis; L-glutamate 5-semialdehyde from L-ornithine: step 1/1. Functionally, catalyzes the interconversion of ornithine to glutamate semialdehyde. This is Ornithine aminotransferase from Bacillus cereus (strain Q1).